The sequence spans 289 residues: Phosphate import ATP-binding protein PstB (289 aa).

A disordered region spans residues 1–37; it reads MRSIDRPGGQAARPTIGSVAGASNTRTRDARSLPDTP. The region spanning 41-284 is the ABC transporter domain; it reads AAAENFSFYY…PVRRETEDYI (244 aa). Residue 73 to 80 participates in ATP binding; the sequence is GPSGCGKS.

The protein belongs to the ABC transporter superfamily. Phosphate importer (TC 3.A.1.7) family. The complex is composed of two ATP-binding proteins (PstB), two transmembrane proteins (PstC and PstA) and a solute-binding protein (PstS).

The protein localises to the cell inner membrane. The catalysed reaction is phosphate(out) + ATP + H2O = ADP + 2 phosphate(in) + H(+). Functionally, part of the ABC transporter complex PstSACB involved in phosphate import. Responsible for energy coupling to the transport system. The protein is Phosphate import ATP-binding protein PstB of Aromatoleum aromaticum (strain DSM 19018 / LMG 30748 / EbN1) (Azoarcus sp. (strain EbN1)).